A 453-amino-acid chain; its full sequence is Exodeoxyribonuclease 7 large subunit (453 aa).

The protein belongs to the XseA family. In terms of assembly, heterooligomer composed of large and small subunits.

Its subcellular location is the cytoplasm. It carries out the reaction Exonucleolytic cleavage in either 5'- to 3'- or 3'- to 5'-direction to yield nucleoside 5'-phosphates.. Bidirectionally degrades single-stranded DNA into large acid-insoluble oligonucleotides, which are then degraded further into small acid-soluble oligonucleotides. This chain is Exodeoxyribonuclease 7 large subunit, found in Geobacter metallireducens (strain ATCC 53774 / DSM 7210 / GS-15).